The following is a 90-amino-acid chain: Probable Fe(2+)-trafficking protein (90 aa).

Belongs to the Fe(2+)-trafficking protein family. As to quaternary structure, monomer.

Its function is as follows. Could be a mediator in iron transactions between iron acquisition and iron-requiring processes, such as synthesis and/or repair of Fe-S clusters in biosynthetic enzymes. This Yersinia pestis bv. Antiqua (strain Antiqua) protein is Probable Fe(2+)-trafficking protein.